A 581-amino-acid polypeptide reads, in one-letter code: NADH-quinone oxidoreductase subunit C/D (581 aa).

Residues 1–172 (MSGAELISDL…PPFVMTAARF (172 aa)) form an NADH dehydrogenase I subunit C region. Positions 196-581 (ELMILNYGPH…IDYVMSDVDR (386 aa)) are NADH dehydrogenase I subunit D.

It in the N-terminal section; belongs to the complex I 30 kDa subunit family. In the C-terminal section; belongs to the complex I 49 kDa subunit family. In terms of assembly, NDH-1 is composed of 13 different subunits. Subunits NuoB, CD, E, F, and G constitute the peripheral sector of the complex.

The protein localises to the cell inner membrane. The catalysed reaction is a quinone + NADH + 5 H(+)(in) = a quinol + NAD(+) + 4 H(+)(out). Functionally, NDH-1 shuttles electrons from NADH, via FMN and iron-sulfur (Fe-S) centers, to quinones in the respiratory chain. The immediate electron acceptor for the enzyme in this species is believed to be ubiquinone. Couples the redox reaction to proton translocation (for every two electrons transferred, four hydrogen ions are translocated across the cytoplasmic membrane), and thus conserves the redox energy in a proton gradient. This is NADH-quinone oxidoreductase subunit C/D from Rhodopseudomonas palustris (strain BisA53).